A 306-amino-acid chain; its full sequence is Type 3 secretion system translocon protein SctB (306 aa).

The helical transmembrane segment at 128 to 152 (LMIAMAVVSGIMAATSTVASAFSIA) threads the bilayer.

Belongs to the SctB/YopD family. The core secretion machinery of the T3SS is composed of approximately 20 different proteins, including cytoplasmic components, a base, an export apparatus and a needle. This subunit is involved in the formation of a pore, called the translocon, in host membrane. Interacts with YopB/SctE and YopE. Together with YopB/SctE, forms a multimeric integral membrane complex with a mass of between 500 and 700 kDa. Interacts with its cognate chaperone SycD.

The protein localises to the secreted. The protein resides in the host membrane. In terms of biological role, component of the type III secretion system (T3SS), also called injectisome, which is used to inject bacterial effector proteins into eukaryotic host cells. YopB/SctE and YopD/SctB are inserted into the host membrane where they form a pore and allow the translocation of effector proteins into the cytosol of target cells. Its function is as follows. Involved in pathogenesis. Essential for the establishment of Yersinia infections in a mouse model system, but not for the targeting of effector Yops. May modulate the host's immune response at a distance from the site of infection. The chain is Type 3 secretion system translocon protein SctB from Yersinia enterocolitica.